The sequence spans 401 residues: MAKQKFERTKPHVNVGTIGHVDHGKTTLTAAITKVLALQGAAQFVSYDQIDNAPEERARGITIAIRHVEYQTARRHYAHVDCPGHADYIKNMITGAAQMDGAILVVSAPDGPMPQTREHVLLARQVQVPAMVVFLNKVDMMDDEELLELVELELRELLSNHGFPGDEVPIVRGSALAALSSTSTDINAPEYKCILDLMNAVDEYIPTPVREIDKPFLMPIEDVFGIKGRGTVVTGRIERGKVKMGDTVEIIGMTHEAPRRTVVTGVEMFQKTLDEGIAGDNVGVLLRGIERTEVERGQVLAAPGSIKPHAKFKANVYVLKKEEGGRHTPFFSGYRPQFYIRTTDVTGAIHLPEGVEMVMPGDNIEMTVELIVPVAIEEGLRFAIREGGRTVGAGVVSAIVD.

The tr-type G domain occupies 10-209; it reads KPHVNVGTIG…AVDEYIPTPV (200 aa). The interval 19-26 is G1; it reads GHVDHGKT. Position 19–26 (19–26) interacts with GTP; the sequence is GHVDHGKT. T26 is a binding site for Mg(2+). Residues 60-64 form a G2 region; the sequence is GITIA. Positions 81-84 are G3; sequence DCPG. GTP is bound by residues 81–85 and 136–139; these read DCPGH and NKVD. The tract at residues 136–139 is G4; the sequence is NKVD. Residues 174 to 176 form a G5 region; sequence SAL.

It belongs to the TRAFAC class translation factor GTPase superfamily. Classic translation factor GTPase family. EF-Tu/EF-1A subfamily. Monomer.

It is found in the cytoplasm. The catalysed reaction is GTP + H2O = GDP + phosphate + H(+). In terms of biological role, GTP hydrolase that promotes the GTP-dependent binding of aminoacyl-tRNA to the A-site of ribosomes during protein biosynthesis. The sequence is that of Elongation factor Tu 1 from Roseiflexus sp. (strain RS-1).